We begin with the raw amino-acid sequence, 330 residues long: Glucan endo-1,3-beta-glucosidase GIII (330 aa).

The first 25 residues, 1–25, serve as a signal peptide directing secretion; that stretch reads MARKGVDVAVALVLVALAAFPAVHS. Glutamate 117 (proton donor) is an active-site residue. Catalysis depends on glutamate 255, which acts as the Nucleophile.

It belongs to the glycosyl hydrolase 17 family.

The enzyme catalyses Hydrolysis of (1-&gt;3)-beta-D-glucosidic linkages in (1-&gt;3)-beta-D-glucans.. Its function is as follows. May provide a degree of protection against microbial invasion of germinated barley grain through its ability to degrade fungal cell wall polysaccharides. This chain is Glucan endo-1,3-beta-glucosidase GIII, found in Hordeum vulgare (Barley).